The primary structure comprises 348 residues: UPF0283 membrane protein HAPS_0079 (348 aa).

3 helical membrane-spanning segments follow: residues 57-77, 86-106, and 203-223; these read FLAA…QWLI, IYFA…GAII, and ENAI…MVAW.

Belongs to the UPF0283 family.

The protein localises to the cell inner membrane. The chain is UPF0283 membrane protein HAPS_0079 from Glaesserella parasuis serovar 5 (strain SH0165) (Haemophilus parasuis).